Consider the following 276-residue polypeptide: Energy-coupling factor transporter ATP-binding protein EcfA1 (276 aa).

The ABC transporter domain maps to 2 to 237 (IEIKNLKFKY…GSELVDLGLD (236 aa)). 37–44 (GHNGSGKS) is an ATP binding site.

The protein belongs to the ABC transporter superfamily. Energy-coupling factor EcfA family. In terms of assembly, forms a stable energy-coupling factor (ECF) transporter complex composed of 2 membrane-embedded substrate-binding proteins (S component), 2 ATP-binding proteins (A component) and 2 transmembrane proteins (T component).

It is found in the cell membrane. Functionally, ATP-binding (A) component of a common energy-coupling factor (ECF) ABC-transporter complex. Unlike classic ABC transporters this ECF transporter provides the energy necessary to transport a number of different substrates. In Streptococcus thermophilus (strain CNRZ 1066), this protein is Energy-coupling factor transporter ATP-binding protein EcfA1.